Here is a 404-residue protein sequence, read N- to C-terminus: Coenzyme F420H(2) oxidase (404 aa).

Fe cation is bound by residues H84, E86, D88, H89, H152, D170, and H233. A Flavodoxin-like domain is found at V259–A399. FMN contacts are provided by residues T265 to T270, A317 to D320, and S351 to G356.

In the N-terminal section; belongs to the zinc metallo-hydrolase group 3 family. The cofactor is FMN. Fe cation serves as cofactor.

The enzyme catalyses 2 reduced coenzyme F420-(gamma-L-Glu)(n) + O2 = 2 oxidized coenzyme F420-(gamma-L-Glu)(n) + 2 H2O + 2 H(+). In terms of biological role, catalyzes the oxidation of F420H(2) with O(2). May be involved in O(2) detoxification, reducing the intracellular O(2) concentration to a level allowing growth at the expense of methane formation. The protein is Coenzyme F420H(2) oxidase of Methanothermobacter thermautotrophicus (strain ATCC 29096 / DSM 1053 / JCM 10044 / NBRC 100330 / Delta H) (Methanobacterium thermoautotrophicum).